Here is a 427-residue protein sequence, read N- to C-terminus: MSAIVDIVGREILDSRGNPTVECDVLLESGTMGRAAVPSGASTGSREAIELRDGDKTRYLGKGVLKAVEHINTEISEAVLGLDASEQAFLDKTLIDLDGTDNKSRLGANAMLAVSMAVARAAAEESGLPLYRYFGGMGAVQMPVPMMNVVNGGAHANNSLDIQEFMIIPLGAPSFREALRYGAEVFHALKKIIHDKGMSTAVGDEGGFTPSVASHEEAIQLILQAIDSAGYTAGEQIAIGLDCAASEFYKDGKYQLGAEGLSLNAQEWTDMLATWVDKYPIISIEDGMAENDWDGWKILTDRLGQQVQIVGDDLFVTNTKIFKEGIDKGIANSILIKINQIGTLTETFACIEMAKRAGYTAVISHRSGETEDSTIADIAVGTNAGQIKTGSLSRSDRMAKYNQLLRIEEDLGEIAFYPGRAAFYNLR.

(2R)-2-phosphoglycerate is bound at residue Gln-163. Residue Glu-205 is the Proton donor of the active site. Asp-242, Glu-285, and Asp-312 together coordinate Mg(2+). Lys-337, Arg-366, Ser-367, and Lys-388 together coordinate (2R)-2-phosphoglycerate. Catalysis depends on Lys-337, which acts as the Proton acceptor.

This sequence belongs to the enolase family. Mg(2+) is required as a cofactor.

The protein resides in the cytoplasm. It localises to the secreted. Its subcellular location is the cell surface. It catalyses the reaction (2R)-2-phosphoglycerate = phosphoenolpyruvate + H2O. It participates in carbohydrate degradation; glycolysis; pyruvate from D-glyceraldehyde 3-phosphate: step 4/5. Functionally, catalyzes the reversible conversion of 2-phosphoglycerate (2-PG) into phosphoenolpyruvate (PEP). It is essential for the degradation of carbohydrates via glycolysis. This Albidiferax ferrireducens (strain ATCC BAA-621 / DSM 15236 / T118) (Rhodoferax ferrireducens) protein is Enolase.